Reading from the N-terminus, the 353-residue chain is Phospho-N-acetylmuramoyl-pentapeptide-transferase (353 aa).

10 helical membrane passes run 22 to 42 (FAFFIALCLSLFLMPKFITWA), 65 to 85 (TPTMGGLIFISSAVIASLFCI), 88 to 108 (DNIFAISALLCLILFCLIGLI), 129 to 149 (LLAQIIAGLICILPLYFSSEL), 161 to 181 (PLFDMEIFAIAFWILVLISSS), 192 to 212 (GLATVPGIFSLSTLGIFLYLS), 228 to 248 (GLGEVVIICAALIGALMGFLW), 256 to 276 (VFMGDSGSLALGGFIGFLAVI), 281 to 301 (ILLLLIGFVFVLETVSVILQV), and 330 to 350 (KIIVRFWMIALLSNLLALASI).

It belongs to the glycosyltransferase 4 family. MraY subfamily. Mg(2+) serves as cofactor.

The protein localises to the cell inner membrane. It carries out the reaction UDP-N-acetyl-alpha-D-muramoyl-L-alanyl-gamma-D-glutamyl-meso-2,6-diaminopimeloyl-D-alanyl-D-alanine + di-trans,octa-cis-undecaprenyl phosphate = di-trans,octa-cis-undecaprenyl diphospho-N-acetyl-alpha-D-muramoyl-L-alanyl-D-glutamyl-meso-2,6-diaminopimeloyl-D-alanyl-D-alanine + UMP. It functions in the pathway cell wall biogenesis; peptidoglycan biosynthesis. Functionally, catalyzes the initial step of the lipid cycle reactions in the biosynthesis of the cell wall peptidoglycan: transfers peptidoglycan precursor phospho-MurNAc-pentapeptide from UDP-MurNAc-pentapeptide onto the lipid carrier undecaprenyl phosphate, yielding undecaprenyl-pyrophosphoryl-MurNAc-pentapeptide, known as lipid I. This is Phospho-N-acetylmuramoyl-pentapeptide-transferase from Campylobacter jejuni subsp. jejuni serotype O:2 (strain ATCC 700819 / NCTC 11168).